The primary structure comprises 794 residues: Ubiquitin carboxyl-terminal hydrolase 10 (794 aa).

Ala-2 is subject to N-acetylalanine. An interaction with p53/TP53 region spans residues 2 to 99; the sequence is ALHNPQYIFG…ILGCPTSKKT (98 aa). The segment at 6–21 is G3BP1-binding; sequence PQYIFGDFSPDEFNQF. Phosphothreonine occurs at positions 24 and 99. The segment at 123–164 is disordered; that stretch reads ESSSNAEAETLENDSGAGGLGQRERKKKKKRPPGYYSYLKDG. Phosphoserine is present on residues Ser-209, Ser-224, and Ser-316. The tract at residues 303 to 326 is disordered; sequence ESADLDPAKPESQSPPAESALSVS. Positions 313–326 are enriched in polar residues; sequence ESQSPPAESALSVS. At Ser-332 the chain carries Phosphoserine; by ATM. Ser-361 and Ser-366 each carry phosphoserine. One can recognise a USP domain in the interval 411–791; it reads RGLINKGNWC…TAYLLYYRRV (381 aa). The active-site Nucleophile is Cys-420. Residue Ser-543 is modified to Phosphoserine. The disordered stretch occupies residues 546 to 588; that stretch reads HEKHSVSNGPGSHLIEDEELEDTGEGSEDEWEQVGPKNKTSVT. Residues 561 to 577 are compositionally biased toward acidic residues; that stretch reads EDEELEDTGEGSEDEWE. Thr-568 is subject to Phosphothreonine. Ser-572 carries the post-translational modification Phosphoserine. The active-site Proton acceptor is His-745.

This sequence belongs to the peptidase C19 family. USP10 subfamily. Found in a deubiquitination complex with TANK, USP10 and ZC3H12A; this complex inhibits genotoxic stress- or interleukin-1-beta (IL1B)-mediated NF-kappa-B activation by promoting IKBKG or TRAF6 deubiquitination. Interacts with IKBKG; this interaction increases in response to DNA damage. Interacts with TANK; this interaction increases in response to DNA damage. Interacts with TRAF6; this interaction increases in response to DNA damage. Interacts with ZC3H12A; this interaction increases in response to DNA damage. Interacts with G3BP1 (via NTF2 domain) and G3BP2 (via NTF2 domain); inhibiting stress granule formation. Post-translationally, phosphorylated by ATM following DNA damage, leading to stabilization and translocation it to the nucleus. Ubiquitinated. Deubiquitinated by USP13.

It is found in the cytoplasm. The protein localises to the nucleus. It localises to the early endosome. It catalyses the reaction Thiol-dependent hydrolysis of ester, thioester, amide, peptide and isopeptide bonds formed by the C-terminal Gly of ubiquitin (a 76-residue protein attached to proteins as an intracellular targeting signal).. With respect to regulation, specifically inhibited by spautin-1 (specific and potent autophagy inhibitor-1), a derivative of MBCQ that binds to USP10 and inhibits deubiquitinase activity. Regulated by PIK3C3/VPS34-containing complexes. Its function is as follows. Hydrolase that can remove conjugated ubiquitin from target proteins such as p53/TP53, RPS2/us5, RPS3/us3, RPS10/eS10, BECN1, SNX3 and CFTR. Acts as an essential regulator of p53/TP53 stability: in unstressed cells, specifically deubiquitinates p53/TP53 in the cytoplasm, leading to counteract MDM2 action and stabilize p53/TP53. Following DNA damage, translocates to the nucleus and deubiquitinates p53/TP53, leading to regulate the p53/TP53-dependent DNA damage response. Component of a regulatory loop that controls autophagy and p53/TP53 levels: mediates deubiquitination of BECN1, a key regulator of autophagy, leading to stabilize the PIK3C3/VPS34-containing complexes. In turn, PIK3C3/VPS34-containing complexes regulate USP10 stability, suggesting the existence of a regulatory system by which PIK3C3/VPS34-containing complexes regulate p53/TP53 protein levels via USP10 and USP13. Does not deubiquitinate MDM2. Plays a key role in 40S ribosome subunit recycling when a ribosome has stalled during translation: acts both by inhibiting formation of stress granules, which store stalled translation pre-initiation complexes, and mediating deubiquitination of 40S ribosome subunits. Acts as a negative regulator of stress granules formation by lowering G3BP1 and G3BP2 valence, thereby preventing G3BP1 and G3BP2 ability to undergo liquid-liquid phase separation (LLPS) and assembly of stress granules. Promotes 40S ribosome subunit recycling following ribosome dissociation in response to ribosome stalling by mediating deubiquitination of 40S ribosomal proteins RPS2/us5, RPS3/us3 and RPS10/eS10, thereby preventing their degradation by the proteasome. Part of a ribosome quality control that takes place when ribosomes have stalled during translation initiation (iRQC): USP10 acts by removing monoubiquitination of RPS2/us5 and RPS3/us3, promoting 40S ribosomal subunit recycling. Deubiquitinates CFTR in early endosomes, enhancing its endocytic recycling. Involved in a TANK-dependent negative feedback response to attenuate NF-kappa-B activation via deubiquitinating IKBKG or TRAF6 in response to interleukin-1-beta (IL1B) stimulation or upon DNA damage. Deubiquitinates TBX21 leading to its stabilization. Plays a negative role in the RLR signaling pathway upon RNA virus infection by blocking the RIGI-mediated MAVS activation. Mechanistically, removes the unanchored 'Lys-63'-linked polyubiquitin chains of MAVS to inhibit its aggregation, essential for its activation. This is Ubiquitin carboxyl-terminal hydrolase 10 (Usp10) from Rattus norvegicus (Rat).